A 132-amino-acid chain; its full sequence is NADH-quinone oxidoreductase subunit A (132 aa).

The next 3 helical transmembrane spans lie at 14 to 34 (FFTFFFIAVSICVFMLSISWI), 66 to 86 (FYLVAIYFVLFDVEALYLYAW), and 96 to 116 (IGFIEALIFILFLLSGLIYLI).

Belongs to the complex I subunit 3 family. NDH-1 is composed of 13 different subunits. Subunits NuoA, H, J, K, L, M, N constitute the membrane sector of the complex.

The protein localises to the cell membrane. It catalyses the reaction a quinone + NADH + 5 H(+)(in) = a quinol + NAD(+) + 4 H(+)(out). Functionally, NDH-1 shuttles electrons from NADH, via FMN and iron-sulfur (Fe-S) centers, to quinones in the respiratory chain. The immediate electron acceptor for the enzyme in this species is believed to be ubiquinone. Couples the redox reaction to proton translocation (for every two electrons transferred, four hydrogen ions are translocated across the cytoplasmic membrane), and thus conserves the redox energy in a proton gradient. This is NADH-quinone oxidoreductase subunit A from Buchnera aphidicola subsp. Baizongia pistaciae (strain Bp).